Consider the following 734-residue polypeptide: Photosystem I P700 chlorophyll a apoprotein A2 (734 aa).

8 helical membrane-spanning segments follow: residues 46-69 (IFAS…FHVA), 135-158 (LYTG…LHLQ), 175-199 (LNHH…HVAI), 273-291 (IAHH…GHMY), 330-353 (LHFQ…QHMY), 369-395 (AALY…IFFI), 417-439 (AIIS…LYVH), and 517-535 (FLVH…LILV). Residues C559 and C568 each coordinate [4Fe-4S] cluster. Helical transmembrane passes span 575–596 (AFYL…YWHW) and 643–665 (LSVW…MFLI). Chlorophyll a is bound by residues H654, M662, and Y670. Phylloquinone is bound at residue W671. A helical transmembrane segment spans residues 707 to 727 (LVGLAHFSVGYIFTYAAFLIA).

The protein belongs to the PsaA/PsaB family. The PsaA/B heterodimer binds the P700 chlorophyll special pair and subsequent electron acceptors. PSI consists of a core antenna complex that captures photons, and an electron transfer chain that converts photonic excitation into a charge separation. The eukaryotic PSI reaction center is composed of at least 11 subunits. It depends on P700 is a chlorophyll a/chlorophyll a' dimer, A0 is one or more chlorophyll a, A1 is one or both phylloquinones and FX is a shared 4Fe-4S iron-sulfur center. as a cofactor.

It localises to the plastid. Its subcellular location is the chloroplast thylakoid membrane. It catalyses the reaction reduced [plastocyanin] + hnu + oxidized [2Fe-2S]-[ferredoxin] = oxidized [plastocyanin] + reduced [2Fe-2S]-[ferredoxin]. Its function is as follows. PsaA and PsaB bind P700, the primary electron donor of photosystem I (PSI), as well as the electron acceptors A0, A1 and FX. PSI is a plastocyanin-ferredoxin oxidoreductase, converting photonic excitation into a charge separation, which transfers an electron from the donor P700 chlorophyll pair to the spectroscopically characterized acceptors A0, A1, FX, FA and FB in turn. Oxidized P700 is reduced on the lumenal side of the thylakoid membrane by plastocyanin. The protein is Photosystem I P700 chlorophyll a apoprotein A2 of Citrus sinensis (Sweet orange).